The sequence spans 119 residues: Large ribosomal subunit protein bL20 (119 aa).

The protein belongs to the bacterial ribosomal protein bL20 family.

Its function is as follows. Binds directly to 23S ribosomal RNA and is necessary for the in vitro assembly process of the 50S ribosomal subunit. It is not involved in the protein synthesizing functions of that subunit. The polypeptide is Large ribosomal subunit protein bL20 (Acinetobacter baylyi (strain ATCC 33305 / BD413 / ADP1)).